Reading from the N-terminus, the 446-residue chain is MSSISTESSSNLSLLENGGGGSDKPTAETSRRVRRTVSASSLIRKRSDLKLISRVRWEFMRRILTNLQEVLLGTKLFILFPAVPLAVVAHRYDCPRAWVFALSLLGLTPLAERISFLTEQIAFHTGPTVGGLMNATCGNATEMIIAILAVGQRKMRIVKLSLLGSILSNLLFVLGTSLFLGGISNLRKHQSFDPRQGDMNSMLLYLALLCQTLPMIMRFTMEAEEYDGSDVVVLSRASSFVMLIAYLAFLIFHLFSSHLSPPPPPLPQREDVHDDDVSDKEEEGAVIGMWSAIFWLIIMTLLVALLSDYLVSTIQDAADSWGLSVGFIGIILLPIVGNAAEHAGAVIFAFRNKLDITLGIALGSATQIALFVVPVTVLVAWTMGIEMDLNFNLLETACFALSILVTSLVLQDGTSNYMKGLVLLLCYVVIAACFFVSNSPSSKLLF.

Over residues 1–16 (MSSISTESSSNLSLLE) the composition is skewed to low complexity. The segment at 1 to 33 (MSSISTESSSNLSLLENGGGGSDKPTAETSRRV) is disordered. Residues 1 to 69 (MSSISTESSS…MRRILTNLQE (69 aa)) lie on the Cytoplasmic side of the membrane. The chain crosses the membrane as a helical span at residues 70-90 (VLLGTKLFILFPAVPLAVVAH). At 91–96 (RYDCPR) the chain is on the extracellular side. The chain crosses the membrane as a helical span at residues 97 to 117 (AWVFALSLLGLTPLAERISFL). Residues 118 to 128 (TEQIAFHTGPT) lie on the Cytoplasmic side of the membrane. Residues 129 to 149 (VGGLMNATCGNATEMIIAILA) form a helical membrane-spanning segment. A cation selection region spans residues 138–173 (GNATEMIIAILAVGQRKMRIVKLSLLGSILSNLLFV). The Extracellular segment spans residues 150 to 162 (VGQRKMRIVKLSL). A helical membrane pass occupies residues 163–183 (LGSILSNLLFVLGTSLFLGGI). Topologically, residues 184-196 (SNLRKHQSFDPRQ) are cytoplasmic. Residues 197–217 (GDMNSMLLYLALLCQTLPMIM) form a helical membrane-spanning segment. Residues 218 to 238 (RFTMEAEEYDGSDVVVLSRAS) are Extracellular-facing. The chain crosses the membrane as a helical span at residues 239 to 259 (SFVMLIAYLAFLIFHLFSSHL). Residues 260–285 (SPPPPPLPQREDVHDDDVSDKEEEGA) are Cytoplasmic-facing. A helical transmembrane segment spans residues 286–306 (VIGMWSAIFWLIIMTLLVALL). Residues 307–319 (SDYLVSTIQDAAD) lie on the Extracellular side of the membrane. A helical transmembrane segment spans residues 320–340 (SWGLSVGFIGIILLPIVGNAA). The tract at residues 337–372 (GNAAEHAGAVIFAFRNKLDITLGIALGSATQIALFV) is cation selection. Residues 341–359 (EHAGAVIFAFRNKLDITLG) are Cytoplasmic-facing. A helical membrane pass occupies residues 360–380 (IALGSATQIALFVVPVTVLVA). At 381–388 (WTMGIEMD) the chain is on the extracellular side. The helical transmembrane segment at 389-409 (LNFNLLETACFALSILVTSLV) threads the bilayer. Topologically, residues 410–416 (LQDGTSN) are cytoplasmic. Residues 417–437 (YMKGLVLLLCYVVIAACFFVS) form a helical membrane-spanning segment. Residues 438–446 (NSPSSKLLF) lie on the Extracellular side of the membrane.

The protein belongs to the Ca(2+):cation antiporter (CaCA) (TC 2.A.19) family. Cation/proton exchanger (CAX) subfamily. As to expression, expressed at low levels in all tissues.

It is found in the vacuole membrane. In terms of biological role, vacuolar cation/proton exchanger (CAX). Translocates Ca(2+) and other metal ions into vacuoles using the proton gradient formed by H(+)-ATPase and H(+)-pyrophosphatase. Cation selectivity transport in tobacco root tonoplast vesicles is Cd(2+)&gt;Zn(2+)&gt;&gt;Ca(2+)&gt;&gt;&gt;Mn(2+). The sequence is that of Vacuolar cation/proton exchanger 4 (CAX4) from Arabidopsis thaliana (Mouse-ear cress).